Consider the following 61-residue polypeptide: UPF0370 protein SG1720 (61 aa).

The chain crosses the membrane as a helical span at residues 3–23 (WLADYWWVVLLVLAGMLIGGV). Basic and acidic residues predominate over residues 37-47 (NRPELPPHRDN). The segment at 37-61 (NRPELPPHRDNNAQWDEEDDWPKKP) is disordered. Acidic residues predominate over residues 51-61 (WDEEDDWPKKP).

It belongs to the UPF0370 family.

The protein localises to the cell membrane. The chain is UPF0370 protein SG1720 from Sodalis glossinidius (strain morsitans).